We begin with the raw amino-acid sequence, 324 residues long: IDS-like terpene synthase 1 (324 aa).

Residues Asp-77 and Asp-81 each coordinate Mg(2+).

This sequence belongs to the FPP/GGPP synthase family. The cofactor is Mg(2+).

It carries out the reaction (2E)-geranyl diphosphate = (E)-beta-ocimene + diphosphate. The enzyme catalyses (2E)-geranyl diphosphate + H2O = linalool + diphosphate. The catalysed reaction is (2E,6E)-farnesyl diphosphate = (3E,6E)-alpha-farnesene + diphosphate. It catalyses the reaction (2E,6E,10E)-geranylgeranyl diphosphate = (E,E,E)-alpha-springene + diphosphate. Terpene synthase that shows monoterpene synthase activity and produces (E)-beta-ocimene as a major product and linalool as a minor product, using geranyl diphosphate (GPP) as substrate. Also shows sesquiterpene synthase activity as it is able to convert farnesyl diphosphate (FPP) into (E,E)-alpha-farnesene. Finally, TPS1 can convert geranylgeranyl diphosphate into (E,E,E)-alpha-springene. The protein is IDS-like terpene synthase 1 of Melampsora larici-populina (strain 98AG31 / pathotype 3-4-7) (Poplar leaf rust fungus).